A 328-amino-acid chain; its full sequence is MSKKPVRVAVTGAAGQIGYALLFRIASGEMLGKDQPVILQLLEIPDEKAQNALKGVIMELEDCAFPLLAGIEAHSDPLQAFKDTDYALLVGARPRGPGMERADLLAANAQIFTAQGKALNAVASRNVKVLVVGNPANTNAYIAMKSAPDLPAKNFTAMLRLDHNRAASQLAAKAGFKVGDIRKLTVWGNHSPTMYADYRFATVNGESVKAKINDQAWNKDVFLPTVGKRGAAIIAARGLSSAASAANAAIDHMRDWALGSGGEWVTMGVPSNGEYGIPAGIVFGFPVTTENGEYKIVEGLEIDAFSQECIDKTLAELQGEQDGVKHLL.

Position 12-18 (12-18) interacts with NAD(+); sequence GAAGQIG. Substrate-binding residues include R95 and R101. NAD(+) contacts are provided by residues N108, Q115, and 132-134; that span reads VGN. Substrate contacts are provided by N134 and R165. H190 serves as the catalytic Proton acceptor.

It belongs to the LDH/MDH superfamily. MDH type 2 family.

The enzyme catalyses (S)-malate + NAD(+) = oxaloacetate + NADH + H(+). In terms of biological role, catalyzes the reversible oxidation of malate to oxaloacetate. The polypeptide is Malate dehydrogenase (Delftia acidovorans (strain DSM 14801 / SPH-1)).